Reading from the N-terminus, the 146-residue chain is Phospholipase A2 PS22 (146 aa).

Positions 1–19 (MYPAHLLVLLAVCVSLLGA) are cleaved as a signal peptide. Residues 20–27 (ASVPPQPL) constitute a propeptide that is removed on maturation. 7 disulfide bridges follow: C38–C98, C54–C145, C56–C72, C71–C126, C78–C119, C87–C112, and C105–C117. Ca(2+)-binding residues include Y55, G57, and G59. H75 is a catalytic residue. D76 is a Ca(2+) binding site. D120 is a catalytic residue.

The protein belongs to the phospholipase A2 family. Group I subfamily. D49 sub-subfamily. Ca(2+) serves as cofactor. Expressed by the venom gland.

It localises to the secreted. The enzyme catalyses a 1,2-diacyl-sn-glycero-3-phosphocholine + H2O = a 1-acyl-sn-glycero-3-phosphocholine + a fatty acid + H(+). Its function is as follows. Snake venom phospholipase A2 (PLA2) that inhibits collagen-induced platelet aggregation. PLA2 catalyzes the calcium-dependent hydrolysis of the 2-acyl groups in 3-sn-phosphoglycerides. The polypeptide is Phospholipase A2 PS22 (Drysdalia coronoides (White-lipped snake)).